Here is a 383-residue protein sequence, read N- to C-terminus: Lipid-A-disaccharide synthase (383 aa).

The protein belongs to the LpxB family.

It catalyses the reaction a lipid X + a UDP-2-N,3-O-bis[(3R)-3-hydroxyacyl]-alpha-D-glucosamine = a lipid A disaccharide + UDP + H(+). The protein operates within bacterial outer membrane biogenesis; LPS lipid A biosynthesis. In terms of biological role, condensation of UDP-2,3-diacylglucosamine and 2,3-diacylglucosamine-1-phosphate to form lipid A disaccharide, a precursor of lipid A, a phosphorylated glycolipid that anchors the lipopolysaccharide to the outer membrane of the cell. The protein is Lipid-A-disaccharide synthase of Anaeromyxobacter dehalogenans (strain 2CP-1 / ATCC BAA-258).